A 2472-amino-acid polypeptide reads, in one-letter code: Highly reducing polyketide synthase xilA (2472 aa).

In terms of domain architecture, Ketosynthase family 3 (KS3) spans 1-417 (MPGGVRDLPA…GTNGHCIIDD (417 aa)). Active-site for beta-ketoacyl synthase activity residues include Cys162, His298, and His340. The tract at residues 442–502 (NDINGKSGTN…QRKHHHPKTD (61 aa)) is disordered. Residues 450 to 489 (TNGANGANRVNGVNGVNGVNGVNGANGHSNASLLSNGSNN) are compositionally biased toward low complexity. The region spanning 597–932 (FIFTGQGAQW…CTGTLFVHNV (336 aa)) is the Malonyl-CoA:ACP transacylase (MAT) domain. An N-terminal hotdog fold region spans residues 991-1129 (HDLLGSKVPG…GQIKVEVAKF (139 aa)). The PKS/mFAS DH domain occupies 991–1294 (HDLLGSKVPG…FTSLNNEQES (304 aa)). The Proton acceptor; for dehydratase activity role is filled by His1023. A C-terminal hotdog fold region spans residues 1141–1294 (GRLVDAQTWY…FTSLNNEQES (154 aa)). The active-site Proton donor; for dehydratase activity is the Asp1207. The tract at residues 1289–1505 (NNEQESPSTG…IITVHALRSI (217 aa)) is methyltransferase (CMeT) domain. The Enoyl reductase (ER) domain maps to 1724–2036 (GLLTSLYFKP…KGTHIGKMVI (313 aa)). The 180-residue stretch at 2060–2239 (ASYILVGGLS…ATTVSLGFIK (180 aa)) folds into the Ketoreductase (KR) domain. The 79-residue stretch at 2391–2469 (ETVKLVSDAI…SIARVIVEEA (79 aa)) folds into the Carrier domain. Ser2428 bears the O-(pantetheine 4'-phosphoryl)serine mark.

It depends on pantetheine 4'-phosphate as a cofactor.

It functions in the pathway secondary metabolite biosynthesis. Its function is as follows. Highly reducing polyketide synthase; part of the gene cluster that mediates the biosynthesis of the 6-methyl-2-pyrone derivative xylariolide D. XilA produces the 5-alkyl-6-methyl-2-pyrone backbone called prexylariolide D via sequential condensations of 4 malonyl-CoA units with one acetyl-CoA starter unit. During the biosynthesis, the linear polyketide chain is branched by the addition of an acetyl unit as the origin of the methyl group at the 2-pyrone ring. Prexylariolide D is then hydroxylated at the side chain by xilC to form the final product, xylariolide D. The protein is Highly reducing polyketide synthase xilA of Penicillium crustosum (Blue mold fungus).